A 342-amino-acid polypeptide reads, in one-letter code: D-erythrose-4-phosphate dehydrogenase (342 aa).

12-13 (RI) lines the NAD(+) pocket. Residues 154-156 (SCT), R200, 213-214 (TK), and R236 contribute to the substrate site. Residue C155 is the Nucleophile of the active site. An NAD(+)-binding site is contributed by N318.

This sequence belongs to the glyceraldehyde-3-phosphate dehydrogenase family. Epd subfamily. As to quaternary structure, homotetramer.

The protein localises to the cytoplasm. It catalyses the reaction D-erythrose 4-phosphate + NAD(+) + H2O = 4-phospho-D-erythronate + NADH + 2 H(+). Its pathway is cofactor biosynthesis; pyridoxine 5'-phosphate biosynthesis; pyridoxine 5'-phosphate from D-erythrose 4-phosphate: step 1/5. Its function is as follows. Catalyzes the NAD-dependent conversion of D-erythrose 4-phosphate to 4-phosphoerythronate. In Salmonella arizonae (strain ATCC BAA-731 / CDC346-86 / RSK2980), this protein is D-erythrose-4-phosphate dehydrogenase.